Consider the following 351-residue polypeptide: Protein EXPRESSION OF TERPENOIDS 1 (351 aa).

Positions 1–23 are disordered; sequence MANFFSLGGNQEQQHQEISSSQA. Over residues 11–22 the composition is skewed to low complexity; the sequence is QEQQHQEISSSQ. 6 residues coordinate Zn(2+): Cys129, Cys132, Cys140, Cys145, Cys149, and Cys156. The zn(2)-C6 fungal-type; degenerate DNA-binding region spans 129-156; the sequence is CQDCGNQAKKDCQHMRCRTCCKSRGFQC. The segment at 170–219 is disordered; sequence RRERQQQLAALQQQQQGHNNNNNNHKNKRQREDPSASSLVSTRLPSNTNG. The span at 175–193 shows a compositional bias: low complexity; it reads QQLAALQQQQQGHNNNNNN. Polar residues predominate over residues 204 to 219; sequence SASSLVSTRLPSNTNG. Positions 258-261 match the Required for homo- and heterodimerization motif; sequence IGGH. The disordered stretch occupies residues 286-320; it reads TSSGGSAGGVQHHHHNSAAVATATTTSGGDATAAG. The segment covering 303–320 has biased composition (low complexity); the sequence is AAVATATTTSGGDATAAG.

Belongs to the SHI protein family. Forms homodimers and heterodimers with LRP1.

The protein resides in the nucleus. Transcription activator involved in the transcriptional regulation of terpene biosynthesis in glandular trichomes. Binds to the promoter of the linalool synthase TPS5 and promotes TPS5 gene transactivation. Acts synergistically with MYC1 in the transactivation of TPS5. The chain is Protein EXPRESSION OF TERPENOIDS 1 from Solanum lycopersicum (Tomato).